Here is a 156-residue protein sequence, read N- to C-terminus: Extracellular giant hemoglobin major globin subunit A1 (156 aa).

The first 16 residues, 1 to 16 (MKVLIIFACLVVMASA), serve as a signal peptide directing secretion. The 140-residue stretch at 17 to 156 (VCNRLEQILV…YERIASGISG (140 aa)) folds into the Globin domain. A disulfide bridge connects residues Cys-18 and Cys-146. Residue Cys-79 participates in hydrogen sulfide binding. His-110 is a binding site for heme b.

This sequence belongs to the globin family. In terms of assembly, the 400 kDa hemoglobin consists of a spherical 24-mer arranged as a double layer of dome-shaped dodecamers. Each dodecamer is composed of the 3-fold trimer of the tetramer A1-A2-B1-B2 having one intra-tetramer (A1-B2) disulfide bond and one inter-tetramer (B1-B2) disulfide bond per tetramer.

The protein resides in the secreted. The extracellular giant hemoglobin is able to bind and transport oxygen and hydrosulfide simultaneously and reversibly at two different sites. The protein is Extracellular giant hemoglobin major globin subunit A1 (ghbA1) of Oligobrachia mashikoi (Beard worm).